Reading from the N-terminus, the 233-residue chain is MDDTQVNAQLDQMKNFILQEAQDKANEIKTKATQEFTSEKGRIFQNEKIKIIKEYEKKQKLIEVQKKINLSNELNKSRLSVLKVREECLRDVIKEAQKKLATISDDKDKYQTILKNLIYQGFVKLNENKIQVVGRKEDAGLLEKATTEAAAQYKKNVGKSIDVSVDKERFLPQGPKSDYNGPTCCGGVILSALEGRIICKNTLDSRLEICFDQLTPVIRTQLYGASTSRKFFD.

This sequence belongs to the V-ATPase E subunit family. V-ATPase is a heteromultimeric enzyme composed of a peripheral catalytic V1 complex (components A to H) attached to an integral membrane V0 proton pore complex (components: a, c, c', c'' and d).

In terms of biological role, subunit of the peripheral V1 complex of vacuolar ATPase essential for assembly or catalytic function. V-ATPase is responsible for acidifying a variety of intracellular compartments in eukaryotic cells. The chain is V-type proton ATPase subunit E (vatE) from Dictyostelium discoideum (Social amoeba).